Consider the following 129-residue polypeptide: UPF0344 protein MW0851 (129 aa).

4 helical membrane-spanning segments follow: residues 1 to 21 (MLHL…ATYL), 36 to 56 (LHMI…WILI), 67 to 87 (MLLT…EVSI), and 99 to 119 (MFWI…ILPL).

Belongs to the UPF0344 family.

It localises to the cell membrane. In Staphylococcus aureus (strain MW2), this protein is UPF0344 protein MW0851.